The sequence spans 565 residues: Transmembrane 7 superfamily member 3 (565 aa).

A signal peptide spans 1–21 (MWRLRLLVLAVLAAGSAEAQA). Asn-22, Asn-56, Asn-70, and Asn-259 each carry an N-linked (GlcNAc...) asparagine glycan. 7 consecutive transmembrane segments (helical) span residues 287 to 307 (VSTK…CFFG), 311 to 331 (WKTE…YILI), 341 to 361 (VRLV…VASW), 364 to 384 (FGIL…LVSS), 402 to 422 (VFWV…LGCL), 427 to 447 (ILAC…SYMF), and 478 to 498 (NDYI…TLQI).

It is found in the cell membrane. In terms of biological role, involved in the inhibition of cytokine-induced death of pancreatic beta cells. Involved in the promotion of insulin secretion from pancreatic beta cells. Is a downstream transcriptional target of p53/TP53, and acts as a pro-survival homeostatic factor that attenuates the development of cellular stress. Maintains protein homeostasis and promotes cell survival through attenuation of endoplasmic reticulum (ER) stress and the subsequent induction of unfolded protein response (UPR). This is Transmembrane 7 superfamily member 3 (Tm7sf3) from Rattus norvegicus (Rat).